Here is a 177-residue protein sequence, read N- to C-terminus: Crossover junction endodeoxyribonuclease RuvC (177 aa).

Active-site residues include D8, E72, and D144. Mg(2+) is bound by residues D8, E72, and D144.

This sequence belongs to the RuvC family. In terms of assembly, homodimer which binds Holliday junction (HJ) DNA. The HJ becomes 2-fold symmetrical on binding to RuvC with unstacked arms; it has a different conformation from HJ DNA in complex with RuvA. In the full resolvosome a probable DNA-RuvA(4)-RuvB(12)-RuvC(2) complex forms which resolves the HJ. Mg(2+) is required as a cofactor.

The protein resides in the cytoplasm. It catalyses the reaction Endonucleolytic cleavage at a junction such as a reciprocal single-stranded crossover between two homologous DNA duplexes (Holliday junction).. Its function is as follows. The RuvA-RuvB-RuvC complex processes Holliday junction (HJ) DNA during genetic recombination and DNA repair. Endonuclease that resolves HJ intermediates. Cleaves cruciform DNA by making single-stranded nicks across the HJ at symmetrical positions within the homologous arms, yielding a 5'-phosphate and a 3'-hydroxyl group; requires a central core of homology in the junction. The consensus cleavage sequence is 5'-(A/T)TT(C/G)-3'. Cleavage occurs on the 3'-side of the TT dinucleotide at the point of strand exchange. HJ branch migration catalyzed by RuvA-RuvB allows RuvC to scan DNA until it finds its consensus sequence, where it cleaves and resolves the cruciform DNA. The sequence is that of Crossover junction endodeoxyribonuclease RuvC from Teredinibacter turnerae (strain ATCC 39867 / T7901).